The sequence spans 987 residues: Ephrin type-B receptor 2 (987 aa).

The first 19 residues, 1 to 19, serve as a signal peptide directing secretion; the sequence is MGPLWFCCLPLALLPLLAA. At 20-544 the chain is on the extracellular side; sequence VEETLMDSTT…QTSVQEKLPL (525 aa). Residues 21–203 enclose the Eph LBD domain; the sequence is EETLMDSTTA…FYRKCPRVIQ (183 aa). Cystine bridges form between Cys63–Cys185 and Cys98–Cys108. N-linked (GlcNAc...) asparagine glycosylation is found at Asn266, Asn337, Asn429, Asn478, and Asn483. Fibronectin type-III domains are found at residues 325 to 435 and 436 to 531; these read IPSA…TNQA and APSA…TMTE. A helical membrane pass occupies residues 545–565; the sequence is IIGSSAAGLVFLIAVVVIIIV. Residues 566–987 are Cytoplasmic-facing; it reads CNRRGFERAD…QMNQIQSVEV (422 aa). Residues 622–885 form the Protein kinase domain; sequence VKIEQVIGAG…QIVNTLDKMI (264 aa). Residues 628 to 636 and Lys654 each bind ATP; that span reads IGAGEFGEV. Catalysis depends on Asp747, which acts as the Proton acceptor. A Glycyl lysine isopeptide (Lys-Gly) (interchain with G-Cter in ubiquitin) cross-link involves residue Lys892. The SAM domain occupies 914 to 978; sequence TSFNTVDEWL…LNSIQVMRAQ (65 aa). The short motif at 985–987 is the PDZ-binding element; that stretch reads VEV.

It belongs to the protein kinase superfamily. Tyr protein kinase family. Ephrin receptor subfamily. Heterotetramer upon binding of the ligand. The heterotetramer is composed of an ephrin dimer and a receptor dimer. Oligomerization is probably required to induce biological responses. Post-translationally, ligand binding induces cleavage by matrix metalloproteinases (MMPs) such as MMP7/MMP9, producing an EphB2/N-terminal fragment (NTF) and a C-terminal long fragment (EphB2-LF). EphB2-LF is further cleaved by MMPs, producing EphB2/CTF1 which is further cleaved by the PS1/gamma-secretase producing EphB2/CTF2. Polyubiquitinated; ligand binding stimulates ubiquitination. Ubiquitinated by RNF186 at Lys-892, mainly through 'Lys-27'-linked polyubiquitin chains.

The protein resides in the cell membrane. The protein localises to the cell projection. Its subcellular location is the axon. It is found in the dendrite. It carries out the reaction L-tyrosyl-[protein] + ATP = O-phospho-L-tyrosyl-[protein] + ADP + H(+). Its function is as follows. Receptor tyrosine kinase which binds promiscuously transmembrane ephrin-B family ligands residing on adjacent cells, leading to contact-dependent bidirectional signaling into neighboring cells. The signaling pathway downstream of the receptor is referred to as forward signaling while the signaling pathway downstream of the ephrin ligand is referred to as reverse signaling. Functions in axon guidance during development. In addition to axon guidance, also regulates dendritic spines development and maturation and stimulates the formation of excitatory synapses. This is Ephrin type-B receptor 2 (EPHB2) from Coturnix japonica (Japanese quail).